The sequence spans 310 residues: Ribonuclease HIII (310 aa).

One can recognise an RNase H type-2 domain in the interval 91–307 (YNCIGSDEAG…REKAQNLVTK (217 aa)). Residues Asp-97, Glu-98, and Asp-202 each coordinate a divalent metal cation.

Belongs to the RNase HII family. RnhC subfamily. It depends on Mn(2+) as a cofactor. Mg(2+) is required as a cofactor.

It localises to the cytoplasm. It carries out the reaction Endonucleolytic cleavage to 5'-phosphomonoester.. In terms of biological role, endonuclease that specifically degrades the RNA of RNA-DNA hybrids. The chain is Ribonuclease HIII from Staphylococcus haemolyticus (strain JCSC1435).